We begin with the raw amino-acid sequence, 467 residues long: 5-phosphohydroxy-L-lysine phospho-lyase (467 aa).

Lys-278 is subject to N6-(pyridoxal phosphate)lysine.

It belongs to the class-III pyridoxal-phosphate-dependent aminotransferase family. As to quaternary structure, homotetramer. It depends on pyridoxal 5'-phosphate as a cofactor.

The protein resides in the mitochondrion. The catalysed reaction is (5R)-5-phosphooxy-L-lysine + H2O = (S)-2-amino-6-oxohexanoate + NH4(+) + phosphate. In terms of biological role, catalyzes the pyridoxal-phosphate-dependent breakdown of 5-phosphohydroxy-L-lysine, converting it to ammonia, inorganic phosphate and 2-aminoadipate semialdehyde. This is 5-phosphohydroxy-L-lysine phospho-lyase (Phykpl) from Mus musculus (Mouse).